The chain runs to 136 residues: Active regulator of SIRT1 (136 aa).

Arginine 7 bears the Citrulline mark. The interval 13-58 (LAASEAPRDPPGQAKPRGAPVKRPRKTKAIQAQKLRNSAKGKVPKS) is disordered. Serine 84 carries the phosphoserine modification.

This sequence belongs to the AROS family. As to quaternary structure, part of the small subunit (SSU) processome, composed of more than 70 proteins and the RNA chaperone small nucleolar RNA (snoRNA) U3. Interacts with RPS19; the interaction is direct and mediates the integration of RPS19 in state post-A1. Interacts with SIRT1. Citrullinated by PADI4. In terms of tissue distribution, widely expressed (at protein level).

The protein resides in the nucleus. Its subcellular location is the nucleolus. Functionally, part of the small subunit (SSU) processome, first precursor of the small eukaryotic ribosomal subunit. During the assembly of the SSU processome in the nucleolus, many ribosome biogenesis factors, an RNA chaperone and ribosomal proteins associate with the nascent pre-rRNA and work in concert to generate RNA folding, modifications, rearrangements and cleavage as well as targeted degradation of pre-ribosomal RNA by the RNA exosome. Acts as a chaperone that specifically mediates the integration of RPS19 in state post-A1. Direct regulator of SIRT1. Enhances SIRT1-mediated deacetylation of p53/TP53, thereby participating in inhibition of p53/TP53-mediated transcriptional activity. This Homo sapiens (Human) protein is Active regulator of SIRT1.